Reading from the N-terminus, the 113-residue chain is MAWALLLLTLLTQDTGSWAQSALTQPASVSGSPGQSITISCTGTSSDVGSYNLVSWYQQHPGKAPKLMIYEGSKRPSGVSNRFSGSKSGNTASLTISGLQAEDEADYYCCSYA.

Residues 1–19 form the signal peptide; that stretch reads MAWALLLLTLLTQDTGSWA. Gln20 is modified (pyrrolidone carboxylic acid). Residues 20–44 are framework-1; the sequence is QSALTQPASVSGSPGQSITISCTGT. Residues 20–113 enclose the Ig-like domain; it reads QSALTQPASV…EADYYCCSYA (94 aa). Cysteines 41 and 109 form a disulfide. The complementarity-determining-1 stretch occupies residues 45 to 53; that stretch reads SSDVGSYNL. The tract at residues 54-70 is framework-2; sequence VSWYQQHPGKAPKLMIY. Residues 71–73 form a complementarity-determining-2 region; the sequence is EGS. The disordered stretch occupies residues 73 to 92; that stretch reads SKRPSGVSNRFSGSKSGNTA. The interval 74–109 is framework-3; the sequence is KRPSGVSNRFSGSKSGNTASLTISGLQAEDEADYYC. Residues 78–92 show a composition bias toward polar residues; that stretch reads GVSNRFSGSKSGNTA. Positions 110 to 113 are complementarity-determining-3; that stretch reads CSYA.

Immunoglobulins are composed of two identical heavy chains and two identical light chains; disulfide-linked.

The protein localises to the secreted. It is found in the cell membrane. Functionally, v region of the variable domain of immunoglobulin light chains that participates in the antigen recognition. Immunoglobulins, also known as antibodies, are membrane-bound or secreted glycoproteins produced by B lymphocytes. In the recognition phase of humoral immunity, the membrane-bound immunoglobulins serve as receptors which, upon binding of a specific antigen, trigger the clonal expansion and differentiation of B lymphocytes into immunoglobulins-secreting plasma cells. Secreted immunoglobulins mediate the effector phase of humoral immunity, which results in the elimination of bound antigens. The antigen binding site is formed by the variable domain of one heavy chain, together with that of its associated light chain. Thus, each immunoglobulin has two antigen binding sites with remarkable affinity for a particular antigen. The variable domains are assembled by a process called V-(D)-J rearrangement and can then be subjected to somatic hypermutations which, after exposure to antigen and selection, allow affinity maturation for a particular antigen. This is Immunoglobulin lambda variable 2-23 from Homo sapiens (Human).